The primary structure comprises 418 residues: Mitochondrial outer membrane protein SLC25A46 (418 aa).

2 positions are modified to phosphoserine: S32 and S35. T45 carries the phosphothreonine modification. Residues 46–96 (PPDIPGSRNLHWGEKSPSYGVPSAPPTLEGSAEEPFPGGGEGPRPGPSSEQ) form a disordered region. One copy of the Solcar 1 repeat lies at 96–187 (QLNRFAGFGI…GIISEFTPLP (92 aa)). 6 helical membrane-spanning segments follow: residues 103-123 (FGIG…CIVL), 167-187 (FIVQ…TPLP), 202-222 (HLLL…ASLI), 258-278 (LLPL…HYII), 314-334 (FPEL…LYPL), and 382-402 (VFGF…HATI). A Solcar 2 repeat occupies 311-413 (DAYFPELIAN…QITKMIYSTL (103 aa)).

The protein belongs to the mitochondrial carrier (TC 2.A.29) family. As to quaternary structure, associates with the mitochondrial contact site and cristae organizing system (MICOS) complex. May associate with the endoplasmic reticulum membrane protein complex (EMC).

The protein localises to the mitochondrion outer membrane. Transmembrane protein of the mitochondrial outer membrane that controls mitochondrial organization. May regulate the assembly of the MICOS (mitochondrial contact site and cristae organizing system) complex which is essential to the biogenesis and dynamics of mitochondrial cristae, the inwards folds of the inner mitochondrial membrane. Through its interaction with the EMC (endoplasmic reticulum membrane protein complex), could regulate mitochondrial lipid homeostasis and thereby mitochondrial fission. In Mus musculus (Mouse), this protein is Mitochondrial outer membrane protein SLC25A46.